Here is a 229-residue protein sequence, read N- to C-terminus: Cytochrome c oxidase assembly factor 7 (229 aa).

5 Sel1-like repeats span residues 34-66 (PEGC…EVNA), 68-104 (AQSC…NTQG), 108-145 (VDAC…EGGF), 146-182 (APSC…DLGH), and 183-218 (VWGC…DLHG). Positions 197 to 229 (DGTDKDEQRAEELKNRAKDLHGQEKERQLKFGE) are disordered.

It belongs to the hcp beta-lactamase family.

The protein resides in the mitochondrion intermembrane space. In terms of biological role, may be required for assembly of mitochondrial respiratory chain complexes. This chain is Cytochrome c oxidase assembly factor 7 (coa7), found in Danio rerio (Zebrafish).